Here is a 352-residue protein sequence, read N- to C-terminus: Uroporphyrinogen decarboxylase (352 aa).

Residues 26-30 (RQAGR), D76, Y153, S208, and H323 contribute to the substrate site.

Belongs to the uroporphyrinogen decarboxylase family. In terms of assembly, homodimer.

Its subcellular location is the cytoplasm. The enzyme catalyses uroporphyrinogen III + 4 H(+) = coproporphyrinogen III + 4 CO2. It participates in porphyrin-containing compound metabolism; protoporphyrin-IX biosynthesis; coproporphyrinogen-III from 5-aminolevulinate: step 4/4. Functionally, catalyzes the decarboxylation of four acetate groups of uroporphyrinogen-III to yield coproporphyrinogen-III. The protein is Uroporphyrinogen decarboxylase of Prochlorococcus marinus (strain MIT 9303).